The following is an 87-amino-acid chain: DNA-directed RNA polymerase subunit omega (87 aa).

The protein belongs to the RNA polymerase subunit omega family. The RNAP catalytic core consists of 2 alpha, 1 beta, 1 beta' and 1 omega subunit. When a sigma factor is associated with the core the holoenzyme is formed, which can initiate transcription.

It catalyses the reaction RNA(n) + a ribonucleoside 5'-triphosphate = RNA(n+1) + diphosphate. Functionally, promotes RNA polymerase assembly. Latches the N- and C-terminal regions of the beta' subunit thereby facilitating its interaction with the beta and alpha subunits. The chain is DNA-directed RNA polymerase subunit omega from Acidothermus cellulolyticus (strain ATCC 43068 / DSM 8971 / 11B).